We begin with the raw amino-acid sequence, 215 residues long: Adenylate kinase (215 aa).

10 to 15 contacts ATP; the sequence is GAGKGT. The tract at residues 30–59 is NMP; it reads STGDIFRANISGKTELGMKAKGYMDKGLLV. Residues threonine 31, arginine 36, 57–59, 85–88, and glutamine 92 contribute to the AMP site; these read LLV and GFPR. Positions 126–163 are LID; the sequence is GRRVCSKCGASYHIEYNPTKVEGICDLCGSPVVQRKDD. Arginine 127 contributes to the ATP binding site. 2 residues coordinate Zn(2+): cysteine 130 and cysteine 133. 136 to 137 serves as a coordination point for ATP; it reads SY. Residues cysteine 150 and cysteine 153 each contribute to the Zn(2+) site. Arginine 160 and arginine 171 together coordinate AMP. Glutamine 199 serves as a coordination point for ATP.

Belongs to the adenylate kinase family. As to quaternary structure, monomer.

Its subcellular location is the cytoplasm. The catalysed reaction is AMP + ATP = 2 ADP. It functions in the pathway purine metabolism; AMP biosynthesis via salvage pathway; AMP from ADP: step 1/1. Catalyzes the reversible transfer of the terminal phosphate group between ATP and AMP. Plays an important role in cellular energy homeostasis and in adenine nucleotide metabolism. The polypeptide is Adenylate kinase (Clostridium acetobutylicum (strain ATCC 824 / DSM 792 / JCM 1419 / IAM 19013 / LMG 5710 / NBRC 13948 / NRRL B-527 / VKM B-1787 / 2291 / W)).